The following is a 267-amino-acid chain: Tryptophan synthase alpha chain (267 aa).

Active-site proton acceptor residues include Glu-49 and Asp-60.

It belongs to the TrpA family. Tetramer of two alpha and two beta chains.

The enzyme catalyses (1S,2R)-1-C-(indol-3-yl)glycerol 3-phosphate + L-serine = D-glyceraldehyde 3-phosphate + L-tryptophan + H2O. Its pathway is amino-acid biosynthesis; L-tryptophan biosynthesis; L-tryptophan from chorismate: step 5/5. Functionally, the alpha subunit is responsible for the aldol cleavage of indoleglycerol phosphate to indole and glyceraldehyde 3-phosphate. The protein is Tryptophan synthase alpha chain of Salinispora arenicola (strain CNS-205).